We begin with the raw amino-acid sequence, 102 residues long: MAFTQALVTVLALLAGTLPHRHSENSPPKKANGDKCVHHTQCSSDCCLIDLERSGAFCTPKSRIGMGCLPQTKGSLNIMCPCRSGLNCHSKDPTCPRRCQMI.

The first 23 residues, 1–23, serve as a signal peptide directing secretion; the sequence is MAFTQALVTVLALLAGTLPHRHS. 5 disulfide bridges follow: C36–C47, C42–C58, C46–C80, C68–C88, and C82–C99.

This sequence belongs to the colipase family.

The protein resides in the secreted. In Mus musculus (Mouse), this protein is Colipase-like protein 2 (Clpsl2).